Consider the following 166-residue polypeptide: Heavy metal-associated isoprenylated plant protein 45 (166 aa).

Residues 15–78 (LSIVELLVDM…MVKRTGRTAE (64 aa)) enclose the HMA domain. A metal cation-binding residues include cysteine 26 and cysteine 29. Position 163 is a cysteine methyl ester (cysteine 163). Residue cysteine 163 is the site of S-farnesyl cysteine attachment. Residues 164 to 166 (TIM) constitute a propeptide, removed in mature form.

It belongs to the HIPP family.

Heavy-metal-binding protein. This chain is Heavy metal-associated isoprenylated plant protein 45, found in Arabidopsis thaliana (Mouse-ear cress).